The chain runs to 250 residues: uncharacterized protein (250 aa).

Residues 4-24 (FKYLLFLVVFAVFFLTFAFFD) form a helical membrane-spanning segment.

It localises to the membrane. This is an uncharacterized protein from Methanocaldococcus jannaschii (strain ATCC 43067 / DSM 2661 / JAL-1 / JCM 10045 / NBRC 100440) (Methanococcus jannaschii).